Reading from the N-terminus, the 58-residue chain is Preprotein translocase subunit SecG (58 aa).

Residues 1–33 lie on the Cytoplasmic side of the membrane; the sequence is MARRKKYEGLNPFVAAGLIKFSEEGEMERIKLS. A helical membrane pass occupies residues 34 to 55; it reads PKAAIAVSAAIIAALIIINLLL. Over 56-58 the chain is Extracellular; the sequence is PPL.

It belongs to the SEC61-beta family. In terms of assembly, component of the protein translocase complex. Heterotrimer consisting of alpha (SecY), beta (SecG) and gamma (SecE) subunits. Can form oligomers of the heterotrimer.

The protein resides in the cell membrane. Involved in protein export. The function of the beta subunit is unknown, but it may be involved in stabilization of the trimeric complex. The polypeptide is Preprotein translocase subunit SecG (Pyrobaculum arsenaticum (strain DSM 13514 / JCM 11321 / PZ6)).